Consider the following 2344-residue polypeptide: MAAMSRLTGMTTAILPEKKPLNFFLDLRDKTPPCCIRATGKLAWPVFPGQNGKEGPLKTCNKCGKWLNGFGYFGLEDLGDVCLCSIAQQKHKFGPVCLCNRAYIHDCGRWRRRSRFLKHYKALNKVIPCAYQFDESFSTPVFEGEVDDLFVELGAPTSMGFMDKKLLKKGKKLMDKFVDVDEPCLTSRDASLLDSIASDTTIRAKLEEEYGVEMVQAARDRKDFMKNLRLALDNRPANPVTWYTKLGNITEKGKQWAKKVVYGACKVTDPLKTLASILLVGLHNVIAVDTTVMLSTFKPVNLLAILMDWTNDLAGFVTTLVRLLELYGVVQATVNLIIEGVKSFWDKVVCATERCFDLLKRLFDTFEDSVPTGPTAGCLIFMAFVFSTVVGYLPNNSVITTFMKGAGKLTTFAGVIGAIRTLWITINQHMVAKDLTSIQQKVMTVVKMANEAATLDQLEIVSCLCSDLENTLTNRCTLPSYNQHLGILNASQKVISDLHTMVLGKINMTKQRPQPVAVIFKGAPGIGKTYLVHRIARDLGCQHPSTINFGLDHFDSYTGEEVAIADEFNTCGDGESWVELFIQMVNTNPCPLNCDKAENKNKVFNSKYLLCTTNSNMILNATHPRAGAFYRRVMIVEARNKAVESWQATRHGSKPGKSCYSKDMSHLTFQVYPHNMPAPGFVFVGDKLVKSQVAPREYKYSELLDLIKSEHPDVASFDGANRFNFVYPDAQYDQALLMWKQYFVMYGCVARLAKNFVDDIPYNQVHISRASDPKIEGCVEYQCKFQHLWRMVPQFVLGCVNMTNQLGTPLTQQQLDRITNGVEGVTVTTVNNILAFHSQTTLINPSFLKLIWAVRKHLKGLSGVTKVAQFIWRVMTNPVDAYGSLVRTLTGAATFSDEPVSTTIICSNCTIQIHSCGGLLVRYSRDPVPVASDNVDRGDQGVDVFTDPNLISGFSWRQIAHLFVEVISHLCANHLVNLATMAALGPVATKAFQGVKGKTKRGRGARVNLGNDEYDEWQAARREFVNAHDMTAEEYLAMKNKAAMGSDDQDSVMFRSWWTRRQLRPDEDQVTIVGRGGVRNEVIRTRVRQTPKGPKTLDDGGFYDNDYEGLPGFMRHNGSGWMIHIGNGLYISNTHTARSSCSEIVTCSPTTDLCLVKGEAIRSVAQIAEGTPVCDWKKSPISTYGIKKTLSDSTKIDVLAYDGCTQTTHGDCGLPLYDSSGKIVAIHTGKLLGFSKMCTLIDLTITKGVYETSNFFCGEPIDYRGITAHRLVGAEPRPPVSGTRYAKVPGVPDEYKTGYRPANLGRSDPDSDKSLMNIAVKNLQVYQQEPKLDKVDEFIERAAADVLGYLRFLTKGERQANLNFKAAFNTLDLSTSCGPFVPGKKIDHVKDGVMDQVLAKHLYKCWSVANSGKALHHIYACGLKDELRPLDKVREGKKRLLWGCDVGVAVCRAAVFHNICYKLKMVARFGPIAVGVDMTSRDVDVIINNLTSKASDFLCLDYSKWDSTMSPCVVRLAIDILADCCEQTELTKSVVLTLKSHPMTILDAMIVQTKRGLPSGMPFTSVINSICHWLLWSAAVYKSCAEIGLHCSNLYEDAPFYTYGDDGVYAMTPMMVSLLPAIIENLRDYGLSPTAADKTEFIDVCPLNKISFLKRTFELTDIGWVSKLDKSSILRQLEWSKTTSRHMMIEETYDLAKEERGVQLEELQVPAAAHGQEFFNFVCKELERQQAYTQFSVYSYDAARKILADRKRVVSVVPDDEFVNVMEGKARTAPQGEAAGTATTASVPGTTTDGLDPGVVATTSVVTAENSSASIATAGIGGPPQQVDQQETWRTNFYYNDVFTWSVADAPGSILYTVQHSPQNNPFTAVLSQMYAGWAGGMQFRFIVAGSGVFGGRLVAAVIPPGIEIGPGLEVRQFPHVVIDARSLEPVTITMPDLRPNMYHPTGDPGLVPTLVLSVYNNLINPFGGSTSAIQVTVETRPSEDFEFVMIRAPSSKTVDSISPAGLLTTPVLTGVGNDNRWNGQIVGLQPVPGGFSTCNRHWNLNGSTYGWSSPRFADIDHRRGSASYPGSNATNVLQFWYANAGSAVDNPISQVAPDGFPDMSFVPFNGPGIPAAGWVGFGAIWNSNSGAPNVTTVQAYELGFATGAPGNLQPTTNTSGAQTVAKSIYAVVTGTAQNPAGLFVMASGVISTPNANAITYTPQPDRIVTTPGTPAAAPVGKNTPIMFASVVRRTGDVNATAGSANGTQYGTGSQPLPVTIGLSLNNYSSALMPGQFFVWQLTFASGFMEIGLSVDGYFYAGTGASTTLIDLTELIDVRPVGPRPSKSTLVFNLGGTANGFSYV.

Positions 492–653 constitute an SF3 helicase domain; sequence QKVISDLHTM…ESWQATRHGS (162 aa). 522-529 is an ATP binding site; sequence GAPGIGKT. The residue at position 1014 (Y1014) is an O-(5'-phospho-RNA)-tyrosine. At Y1014 the chain carries O-UMP-tyrosine; transient. The Peptidase C24 domain maps to 1109–1244; that stretch reads GLPGFMRHNG…SKMCTLIDLT (136 aa). Residues H1135, D1152, and C1212 each act as for 3CLpro activity in the active site. The region spanning 1495–1619 is the RdRp catalytic domain; it reads SDFLCLDYSK…AMTPMMVSLL (125 aa). An intrachain disulfide couples C1584 to C1591. The disordered stretch occupies residues 1771 to 1794; sequence RTAPQGEAAGTATTASVPGTTTDG. The segment covering 1778 to 1794 has biased composition (low complexity); the sequence is AAGTATTASVPGTTTDG.

Homodimer. As to quaternary structure, homomultimer. Interacts with host type II histo-blood group structures antigens at the surface of target cells. Mn(2+) serves as cofactor. Specific enzymatic cleavages by its own cysteine protease yield mature proteins. The protease cleaves itself from the nascent polyprotein autocatalytically. Precursor p41 can be cleaved by viral 3CLpro into protein p19 and VPg, or cleaved by host protease into protein p23/2 and protein p18. In terms of processing, VPg is uridylylated by the polymerase and is covalently attached to the 5'-end of the polyadenylated genomic and subgenomic RNAs. This uridylylated form acts as a nucleotide-peptide primer for the polymerase.

It localises to the host cytoplasm. The protein resides in the host endoplasmic reticulum. Its subcellular location is the virion. It catalyses the reaction a ribonucleoside 5'-triphosphate + H2O = a ribonucleoside 5'-diphosphate + phosphate + H(+). It carries out the reaction Endopeptidase with a preference for cleavage when the P1 position is occupied by Glu-|-Xaa and the P1' position is occupied by Gly-|-Yaa.. The enzyme catalyses RNA(n) + a ribonucleoside 5'-triphosphate = RNA(n+1) + diphosphate. Functionally, together with NTPase and NS4, initiates the formation of the replication complex. Induces the proliferation of the host smooth ER membranes forming long tubular structures. These remodeled membranes probably form the viral factories that contain the replication complex. Its function is as follows. Displays NTPase activity, but no helicase activity. Induces the formation of convoluted membranes derived from the host ER. These remodeled membranes probably form the viral factories that contain the replication complex. Together with NS2 and NS4, initiates the formation of the replication complex. Probable key protein responsible for the formation of membrane alterations by the virus. Induces the formation of convoluted membranes derived from the host ER. These remodeled membranes probably form the viral factories that contain the replication complex. Together with NS2 and NTPase, initiates the formation of the replication complex. In terms of biological role, viral genome-linked protein is covalently linked to the 5'-end of the positive-strand, negative-strand genomic RNAs and subgenomic RNA. Acts as a genome-linked replication primer. May recruit ribosome to viral RNA thereby promoting viral proteins translation. Interacts with host translation initiation complex to allow the translation of viral proteins. Functionally, processes the polyprotein. 3CLpro-RdRp is first released by autocleavage, then all other proteins are cleaved. May cleave polyadenylate-binding protein thereby inhibiting cellular translation. Its function is as follows. Replicates genomic and antigenomic RNA by recognizing replications specific signals. Also transcribes a subgenomic mRNA by initiating RNA synthesis internally on antigenomic RNA. This sgRNA codes for structural proteins. Catalyzes the covalent attachment VPg with viral RNAs. Capsid protein VP60 self assembles to form an icosahedral capsid with a T=3 symmetry, about 35 nm in diameter, and consisting of 180 capsid proteins. A smaller form of capsid with a diameter of 23 nm might be capsid proteins assembled as icosahedron with T=1 symmetry. The capsid encapsulate VP2 proteins and genomic or subgenomic RNA. Attaches virion to target cells by binding histo-blood group antigens, inducing endocytosis of the viral particle. Acidification of the endosome induces conformational change of capsid protein thereby injecting virus genomic RNA into host cytoplasm. The protein is Genome polyprotein of Oryctolagus cuniculus (Rabbit).